The chain runs to 671 residues: Solute carrier family 5 member 4 (671 aa).

Over 1–38 the chain is Cytoplasmic; the sequence is MPAMGTALPRAMASTASVSTSTGSSELSSLSDNINNPA. A helical transmembrane segment spans residues 39–59; sequence DISVIVIYFVVVMAVGVWAMV. The Extracellular segment spans residues 60–65; the sequence is KTNRST. A helical membrane pass occupies residues 66 to 86; that stretch reads VGGFFLAGRSMTWWPMGASLF. Topologically, residues 87–89 are cytoplasmic; it reads ASN. The helical transmembrane segment at 90-110 threads the bilayer; it reads IGSGHFVGLAGTGAATGIAVT. Residues 111-116 are Extracellular-facing; the sequence is AFESHS. Residues 117 to 137 form a helical membrane-spanning segment; it reads FALLLVLGWFFVPIYIKAGVM. Residues 138–159 lie on the Cytoplasmic side of the membrane; it reads TMPEYLRKRFGGKRLQIYLSVL. Residues 160 to 180 traverse the membrane as a helical segment; that stretch reads SLFICVILTISADIFSGAIFI. Lys181 is a topological domain (extracellular). The helical transmembrane segment at 182-202 threads the bilayer; it reads LALGLDLYLAIFILLAITAVF. Residues 203–218 are Cytoplasmic-facing; the sequence is TITGGLASVIYTDTLQ. Residues 219–239 form a helical membrane-spanning segment; it reads AIIMLVGSFILMIYAFVEVGG. At 240–288 the chain is on the extracellular side; the sequence is YESFTEKYMNAIPSVVEGDNLTISPKCYTPQPDSFHIFRDAVTGDIPWP. The helical transmembrane segment at 289–309 threads the bilayer; the sequence is GTAFGMPITALWYWCINQVIV. At 310–324 the chain is on the cytoplasmic side; that stretch reads QRCLCGKNMSHVKAA. Residues 325-345 traverse the membrane as a helical segment; the sequence is CIVCGYLKLLPIFFMVMPGMI. The Extracellular portion of the chain corresponds to 346-378; the sequence is SRILYTDMVACVVPSECVKQCGVDVGCTNYAYP. Residues 379–399 form a helical membrane-spanning segment; it reads MLVLKLMPMGLRGLMLSVMLA. At 400-434 the chain is on the cytoplasmic side; the sequence is SLMSSLTSIFNSASTLFTMDLYTKIRKKASERELL. The chain crosses the membrane as a helical span at residues 435–455; sequence IAGRLFVSVLIVTSILWVPIV. The Extracellular portion of the chain corresponds to 456-467; it reads EVSQGGQLIHYT. Residues 468 to 488 traverse the membrane as a helical segment; the sequence is EAISSYLGPPIAAVFLVAIFC. The Cytoplasmic portion of the chain corresponds to 489-494; the sequence is KRVNEQ. The chain crosses the membrane as a helical span at residues 495–515; sequence GAFWGLMVGLVLGLIRMIAEF. At 516-537 the chain is on the extracellular side; that stretch reads SYGTGSCLAPSSCPKVICGVHY. The chain crosses the membrane as a helical span at residues 538–558; the sequence is LYYAIILFFVSILVILGVSYL. Residues 559–650 are Cytoplasmic-facing; that stretch reads TKPIPDVHLY…DTSEKPFWRT (92 aa). Positions 583-593 are enriched in acidic residues; the sequence is DLDAEDREENE. The interval 583-604 is disordered; sequence DLDAEDREENEADARTEEDQTE. Basic and acidic residues predominate over residues 594–604; it reads ADARTEEDQTE. Residues 651 to 671 traverse the membrane as a helical segment; the sequence is VVNVNVIVLLAVAAFFYGYFA.

Belongs to the sodium:solute symporter (SSF) (TC 2.A.21) family.

It is found in the cell membrane. Its function is as follows. Generates D-glucose-induced depolarization in a pH-dependent and Na(+)-independent manner, with activity in acidic conditions (pH 5) but not neutral conditions. The chain is Solute carrier family 5 member 4 from Rattus norvegicus (Rat).